A 492-amino-acid chain; its full sequence is ATP synthase subunit beta, plastid (492 aa).

170-177 (GGAGVGKT) is a binding site for ATP.

The protein belongs to the ATPase alpha/beta chains family. As to quaternary structure, F-type ATPases have 2 components, CF(1) - the catalytic core - and CF(0) - the membrane proton channel. CF(1) has five subunits: alpha(3), beta(3), gamma(1), delta(1), epsilon(1). CF(0) has four main subunits: a(1), b(1), b'(1) and c(9-12).

It is found in the plastid membrane. It catalyses the reaction ATP + H2O + 4 H(+)(in) = ADP + phosphate + 5 H(+)(out). Produces ATP from ADP in the presence of a proton gradient across the membrane. The catalytic sites are hosted primarily by the beta subunits. This chain is ATP synthase subunit beta, plastid, found in Aneura mirabilis (Parasitic liverwort).